Reading from the N-terminus, the 729-residue chain is Glycine--tRNA ligase (729 aa).

The transit peptide at 1-33 (MPCLLPSLLRATRAALPLLSPPRVVAASASQRL) directs the protein to the mitochondrion. The WHEP-TRS domain occupies 53–109 (LLAPLRLAVRQQGDFVRKLKEDKAPQVDVDRAVAELKARKRVLEAKELALQPKDDIV). Residue Lys194 is modified to N6-acetyllysine. Glu289 provides a ligand contact to glycine. ATP contacts are provided by residues 321 to 323 (RNE) and 332 to 333 (RV). Residue Glu340 coordinates glycine. Residue Tyr443 is modified to Phosphotyrosine. Position 447–448 (447–448 (EI)) interacts with ATP. An N6-acetyllysine modification is found at Lys491. 566 to 568 (EPS) provides a ligand contact to glycine. Arg573 lines the ATP pocket. The residue at position 690 (Ser690) is a Phosphoserine. Residue Thr726 is modified to Phosphothreonine.

Belongs to the class-II aminoacyl-tRNA synthetase family. As to quaternary structure, homodimer.

It is found in the cytoplasm. The protein localises to the mitochondrion. It localises to the cell projection. The protein resides in the axon. Its subcellular location is the secreted. It is found in the extracellular exosome. The enzyme catalyses tRNA(Gly) + glycine + ATP = glycyl-tRNA(Gly) + AMP + diphosphate. The catalysed reaction is 2 ATP + H(+) = P(1),P(4)-bis(5'-adenosyl) tetraphosphate + diphosphate. In terms of biological role, catalyzes the ATP-dependent ligation of glycine to the 3'-end of its cognate tRNA, via the formation of an aminoacyl-adenylate intermediate (Gly-AMP). Also produces diadenosine tetraphosphate (Ap4A), a universal pleiotropic signaling molecule needed for cell regulation pathways, by direct condensation of 2 ATPs. Thereby, may play a special role in Ap4A homeostasis. The protein is Glycine--tRNA ligase (Gars1) of Mus musculus (Mouse).